The primary structure comprises 107 residues: U1-lycotoxin-Ls1n (107 aa).

A signal peptide spans 1 to 20; the sequence is MMKVLVVVALLVTLISYSSS. Residues 21 to 41 constitute a propeptide that is removed on maturation; the sequence is EGIDDLEADELLSLMANEQTR. Cystine bridges form between cysteine 44–cysteine 59, cysteine 51–cysteine 68, cysteine 58–cysteine 86, and cysteine 70–cysteine 84.

It belongs to the neurotoxin 19 (CSTX) family. 04 (U1-Lctx) subfamily. In terms of tissue distribution, expressed by the venom gland.

It localises to the secreted. The polypeptide is U1-lycotoxin-Ls1n (Lycosa singoriensis (Wolf spider)).